The primary structure comprises 688 residues: Potassium-transporting ATPase ATP-binding subunit (688 aa).

4 helical membrane-spanning segments follow: residues 34-54 (PVMF…LDIL), 62-82 (AMFT…ANMA), 219-239 (VALT…TATL), and 260-280 (VLVA…LSAI). Asp313 serves as the catalytic 4-aspartylphosphate intermediate. Residues Asp350, Glu354, 383–390 (FSAQTRMS), and Lys401 contribute to the ATP site. The Mg(2+) site is built by Asp524 and Asp528. A run of 3 helical transmembrane segments spans residues 594–614 (FAII…LNIM), 622–642 (AILS…PLAL), and 662–682 (IYGL…DLLL).

This sequence belongs to the cation transport ATPase (P-type) (TC 3.A.3) family. Type IA subfamily. As to quaternary structure, the system is composed of three essential subunits: KdpA, KdpB and KdpC.

It is found in the cell inner membrane. It carries out the reaction K(+)(out) + ATP + H2O = K(+)(in) + ADP + phosphate + H(+). Part of the high-affinity ATP-driven potassium transport (or Kdp) system, which catalyzes the hydrolysis of ATP coupled with the electrogenic transport of potassium into the cytoplasm. This subunit is responsible for energy coupling to the transport system and for the release of the potassium ions to the cytoplasm. In Yersinia pestis bv. Antiqua (strain Antiqua), this protein is Potassium-transporting ATPase ATP-binding subunit.